A 159-amino-acid polypeptide reads, in one-letter code: Aspartate carbamoyltransferase regulatory chain (159 aa).

The Zn(2+) site is built by cysteine 113, cysteine 118, cysteine 142, and cysteine 145.

It belongs to the PyrI family. As to quaternary structure, contains catalytic and regulatory chains. It depends on Zn(2+) as a cofactor.

Functionally, involved in allosteric regulation of aspartate carbamoyltransferase. The protein is Aspartate carbamoyltransferase regulatory chain of Saccharolobus islandicus (strain Y.N.15.51 / Yellowstone #2) (Sulfolobus islandicus).